The following is a 171-amino-acid chain: Putative phosphoesterase BH1439 (171 aa).

Histidine 34 (proton donor) is an active-site residue. 2 consecutive short sequence motifs (HXTX) follow at residues 34–37 (HVTL) and 115–118 (HLTI). The Proton acceptor role is filled by histidine 115.

This sequence belongs to the 2H phosphoesterase superfamily. YjcG family.

This is Putative phosphoesterase BH1439 from Halalkalibacterium halodurans (strain ATCC BAA-125 / DSM 18197 / FERM 7344 / JCM 9153 / C-125) (Bacillus halodurans).